Consider the following 500-residue polypeptide: NAD(P)H-quinone oxidoreductase chain 4, chloroplastic (500 aa).

Transmembrane regions (helical) follow at residues 4–24 (FPWL…IFFL), 37–57 (ISIC…HFQL), 87–107 (LGSI…AWPI), 113–130 (LFYF…GLFS), 134–154 (LLLF…LLSM), 167–187 (FILY…GMGL), 211–231 (ILLY…IPLH), 242–262 (HYST…YGLI), 272–292 (AHYL…IYAA), 313–333 (MGFI…GAIL), 334–354 (QILS…TASD), 386–406 (LALP…GLIT), 417–437 (LITF…LSML), and 462–482 (LFIL…PDFV).

It belongs to the complex I subunit 4 family.

Its subcellular location is the plastid. The protein resides in the chloroplast thylakoid membrane. It carries out the reaction a plastoquinone + NADH + (n+1) H(+)(in) = a plastoquinol + NAD(+) + n H(+)(out). It catalyses the reaction a plastoquinone + NADPH + (n+1) H(+)(in) = a plastoquinol + NADP(+) + n H(+)(out). This Triticum aestivum (Wheat) protein is NAD(P)H-quinone oxidoreductase chain 4, chloroplastic (ndhD).